The primary structure comprises 159 residues: Phosphopantetheine adenylyltransferase (159 aa).

Thr10 contributes to the substrate binding site. Residues 10–11 and His18 contribute to the ATP site; that span reads TF. Substrate is bound by residues Lys42, Met74, and Arg88. ATP is bound by residues 89–91, Glu99, and 124–130; these read GLR and WSFISSS.

It belongs to the bacterial CoaD family. Homohexamer. It depends on Mg(2+) as a cofactor.

Its subcellular location is the cytoplasm. The catalysed reaction is (R)-4'-phosphopantetheine + ATP + H(+) = 3'-dephospho-CoA + diphosphate. The protein operates within cofactor biosynthesis; coenzyme A biosynthesis; CoA from (R)-pantothenate: step 4/5. Its function is as follows. Reversibly transfers an adenylyl group from ATP to 4'-phosphopantetheine, yielding dephospho-CoA (dPCoA) and pyrophosphate. The chain is Phosphopantetheine adenylyltransferase from Escherichia coli (strain UTI89 / UPEC).